We begin with the raw amino-acid sequence, 355 residues long: Protein-glutamate methylesterase/protein-glutamine glutaminase 3 (355 aa).

Residues 8–123 (SVLIVDDSGM…AREVEDFVDK (116 aa)) form the Response regulatory domain. The residue at position 59 (aspartate 59) is a 4-aspartylphosphate. Positions 139-161 (RSAPAAGPTPVPQAPPPPAAPPA) are disordered. The segment covering 145–159 (GPTPVPQAPPPPAAP) has biased composition (pro residues). The CheB-type methylesterase domain maps to 160–350 (PAGDGGIIAI…ASLLEITGAS (191 aa)). Active-site residues include serine 172, histidine 199, and aspartate 292.

This sequence belongs to the CheB family. In terms of processing, phosphorylated by CheA. Phosphorylation of the N-terminal regulatory domain activates the methylesterase activity.

Its subcellular location is the cytoplasm. The catalysed reaction is [protein]-L-glutamate 5-O-methyl ester + H2O = L-glutamyl-[protein] + methanol + H(+). The enzyme catalyses L-glutaminyl-[protein] + H2O = L-glutamyl-[protein] + NH4(+). Functionally, involved in chemotaxis. Part of a chemotaxis signal transduction system that modulates chemotaxis in response to various stimuli. Catalyzes the demethylation of specific methylglutamate residues introduced into the chemoreceptors (methyl-accepting chemotaxis proteins or MCP) by CheR. Also mediates the irreversible deamidation of specific glutamine residues to glutamic acid. The sequence is that of Protein-glutamate methylesterase/protein-glutamine glutaminase 3 from Paramagnetospirillum magneticum (strain ATCC 700264 / AMB-1) (Magnetospirillum magneticum).